Here is a 357-residue protein sequence, read N- to C-terminus: Trans-resveratrol di-O-methyltransferase (357 aa).

S-adenosyl-L-methionine-binding residues include glycine 200, aspartate 223, aspartate 243, methionine 244, and lysine 257. Residue histidine 261 is the Proton acceptor of the active site.

Belongs to the class I-like SAM-binding methyltransferase superfamily. Cation-independent O-methyltransferase family. COMT subfamily.

The catalysed reaction is trans-resveratrol + 2 S-adenosyl-L-methionine = pterostilbene + 2 S-adenosyl-L-homocysteine + 2 H(+). In terms of biological role, catalyzes the biosynthesis of pterostilbene from resveratrol. Pterostilbene has both antifungal and pharmacological properties. Also has activity toward resveratrol monomethyl ether (RME). The chain is Trans-resveratrol di-O-methyltransferase (ROMT) from Vitis vinifera (Grape).